The following is a 429-amino-acid chain: Glutamate-1-semialdehyde 2,1-aminomutase (429 aa).

K265 carries the post-translational modification N6-(pyridoxal phosphate)lysine.

The protein belongs to the class-III pyridoxal-phosphate-dependent aminotransferase family. HemL subfamily. Homodimer. Pyridoxal 5'-phosphate serves as cofactor.

It is found in the cytoplasm. It carries out the reaction (S)-4-amino-5-oxopentanoate = 5-aminolevulinate. It functions in the pathway porphyrin-containing compound metabolism; protoporphyrin-IX biosynthesis; 5-aminolevulinate from L-glutamyl-tRNA(Glu): step 2/2. The protein is Glutamate-1-semialdehyde 2,1-aminomutase of Shewanella halifaxensis (strain HAW-EB4).